Here is a 545-residue protein sequence, read N- to C-terminus: CTP synthase (545 aa).

The tract at residues 1-266 (MATNYIFVTG…DDFVCERFRL (266 aa)) is amidoligase domain. A CTP-binding site is contributed by Ser14. Ser14 provides a ligand contact to UTP. ATP is bound by residues 15–20 (SLGKGI) and Asp72. The Mg(2+) site is built by Asp72 and Glu140. CTP contacts are provided by residues 147 to 149 (DIE), 187 to 192 (KTKPTQ), and Lys223. UTP contacts are provided by residues 187 to 192 (KTKPTQ) and Lys223. Position 239-241 (239-241 (KDV)) interacts with ATP. One can recognise a Glutamine amidotransferase type-1 domain in the interval 291–542 (TIGMVGKYTE…VKAAYENHKK (252 aa)). Residue Gly352 participates in L-glutamine binding. Cys379 functions as the Nucleophile; for glutamine hydrolysis in the catalytic mechanism. Residues 380–383 (LGMQ), Glu403, and Arg470 contribute to the L-glutamine site. Active-site residues include His515 and Glu517.

Belongs to the CTP synthase family. As to quaternary structure, homotetramer.

The catalysed reaction is UTP + L-glutamine + ATP + H2O = CTP + L-glutamate + ADP + phosphate + 2 H(+). It carries out the reaction L-glutamine + H2O = L-glutamate + NH4(+). The enzyme catalyses UTP + NH4(+) + ATP = CTP + ADP + phosphate + 2 H(+). It participates in pyrimidine metabolism; CTP biosynthesis via de novo pathway; CTP from UDP: step 2/2. Allosterically activated by GTP, when glutamine is the substrate; GTP has no effect on the reaction when ammonia is the substrate. The allosteric effector GTP functions by stabilizing the protein conformation that binds the tetrahedral intermediate(s) formed during glutamine hydrolysis. Inhibited by the product CTP, via allosteric rather than competitive inhibition. Catalyzes the ATP-dependent amination of UTP to CTP with either L-glutamine or ammonia as the source of nitrogen. Regulates intracellular CTP levels through interactions with the four ribonucleotide triphosphates. This chain is CTP synthase, found in Haemophilus influenzae (strain ATCC 51907 / DSM 11121 / KW20 / Rd).